Consider the following 239-residue polypeptide: 7-cyano-7-deazaguanine synthase (239 aa).

8–18 serves as a coordination point for ATP; sequence FSGGLDSTACL. The Zn(2+) site is built by Cys-194, Cys-209, Cys-212, and Cys-215.

This sequence belongs to the QueC family. The cofactor is Zn(2+).

The catalysed reaction is 7-carboxy-7-deazaguanine + NH4(+) + ATP = 7-cyano-7-deazaguanine + ADP + phosphate + H2O + H(+). It functions in the pathway purine metabolism; 7-cyano-7-deazaguanine biosynthesis. Its function is as follows. Catalyzes the ATP-dependent conversion of 7-carboxy-7-deazaguanine (CDG) to 7-cyano-7-deazaguanine (preQ(0)). In Pyrococcus horikoshii (strain ATCC 700860 / DSM 12428 / JCM 9974 / NBRC 100139 / OT-3), this protein is 7-cyano-7-deazaguanine synthase.